The following is a 153-amino-acid chain: UPF0266 membrane protein YE1773 (153 aa).

A run of 3 helical transmembrane segments spans residues 6-26, 45-65, and 67-87; these read IVLIVFIALLLAYAIYDEFIM, IDCAIFVGLIAILVYNNVMAN, and EPLTTYLLVGLALIAFYLSYI.

This sequence belongs to the UPF0266 family.

It localises to the cell inner membrane. The sequence is that of UPF0266 membrane protein YE1773 from Yersinia enterocolitica serotype O:8 / biotype 1B (strain NCTC 13174 / 8081).